Reading from the N-terminus, the 222-residue chain is MGQKVHPHGLRVGVIKDWDAKWYADKKNFSDNLVEDNNIRNFVKKKVYAAGISKIEIERAGKRVKLNIYTAKPGMVIGKGGQGIEALKGELKNIVSDNKNILINIVEVKSAETDAQLMAENVAQQLEKRISFRRAMKQTIQRAMKSGIKGVKTACSGRLGGADIARTEFYHEGTIPLQTLRADIDYGFAEADTTYGKIGVKVWVYKGEVLPAKKEVKEEVNA.

Positions 39 to 109 constitute a KH type-2 domain; the sequence is IRNFVKKKVY…NILINIVEVK (71 aa).

Belongs to the universal ribosomal protein uS3 family. As to quaternary structure, part of the 30S ribosomal subunit. Forms a tight complex with proteins S10 and S14.

Its function is as follows. Binds the lower part of the 30S subunit head. Binds mRNA in the 70S ribosome, positioning it for translation. The sequence is that of Small ribosomal subunit protein uS3 from Clostridium tetani (strain Massachusetts / E88).